A 146-amino-acid chain; its full sequence is L-fucose mutarotase (146 aa).

His-22 serves as the catalytic Proton donor. Substrate-binding positions include Asp-30, Arg-109, and 131–133; that span reads YGN.

Belongs to the RbsD / FucU family. FucU mutarotase subfamily. As to quaternary structure, homodecamer.

Its subcellular location is the cytoplasm. The catalysed reaction is alpha-L-fucose = beta-L-fucose. It functions in the pathway carbohydrate metabolism; L-fucose metabolism. Its function is as follows. Involved in the anomeric conversion of L-fucose. The chain is L-fucose mutarotase from Glaesserella parasuis serovar 5 (strain SH0165) (Haemophilus parasuis).